Here is a 2472-residue protein sequence, read N- to C-terminus: MDPSGVKVLETAEDIQERRQQVLDRYHRFKELSTLRRQKLEDSYRFQFFQRDAEELEKWIQEKLQIASDENYKDPTNLQGKLQKHQAFEAEVQANSGAIVKLDETGNLMISEGHFASETIRTRLMELHRQWELLLEKMREKGIKLLQAQKLVQYLRECEDVMDWINDKEAIVTSEELGQDLEHVEVLQKKFEEFQTDMAAHEERVNEVNQFAAKLIQEQHPEEELIKTKQDEVNAAWQRLKGLALQRQGKLFGAAEVQRFNRDVDETISWIKEKEQLMASDDFGRDLASVQALLRKHEGLERDLAALEDKVKALCAEADRLQQSHPLSATQIQVKREELITNWEQIRTLAAERHARLNDSYRLQRFLADFRDLTSWVTEMKALINADELASDVAGAEALLDRHQEHKGEIDAHEDSFKSADESGQALLAAGHYASDEVREKLTVLSEERAALLELWELRRQQYEQCMDLQLFYRDTEQVDNWMSKQEAFLLNEDLGDSLDSVEALLKKHEDFEKSLSAQEEKITALDEFATKLIQNNHYAMEDVATRRDALLSRRNALHERAMRRRAQLADSFHLQQFFRDSDELKSWVNEKMKTATDEAYKDPSNLQGKVQKHQAFEAELSANQSRIDALEKAGQKLIDVNHYAKDEVAARMNEVISLWKKLLEATELKGIKLREANQQQQFNRNVEDIELWLYEVEGHLASDDYGKDLTNVQNLQKKHALLEADVAAHQDRIDGITIQARQFQDAGHFDAENIKKKQEALVARYEALKEPMVARKQKLADSLRLQQLFRDVEDEETWIREKEPIAASTNRGKDLIGVQNLLKKHQALQAEIAGHEPRIKAVTQKGNAMVEEGHFAAEDVKAKLHELNQKWEALKAKASQRRQDLEDSLQAQQYFADANEAESWMREKEPIVGSTDYGKDEDSAEALLKKHEALMSDLSAYGSSIQALREQAQSCRQQVAPTDDETGKELVLALYDYQEKSPREVTMKKGDILTLLNSTNKDWWKVEVNDRQGFVPAAYVKKLDPAQSASRENLLEEQGSIALRQEQIDNQTRITKEAGSVSLRMKQVEELYHSLLELGEKRKGMLEKSCKKFMLFREANELQQWINEKEAALTSEEVGADLEQVEVLQKKFDDFQKDLKANESRLKDINKVAEDLESEGLMAEEVQAVQQQEVYGMMPRDETDSKTASPWKSARLMVHTVATFNSIKELNERWRSLQQLAEERSQLLGSAHEVQRFHRDADETKEWIEEKNQALNTDNYGHDLASVQALQRKHEGFERDLAALGDKVNSLGETAERLIQSHPESAEDLQEKCTELNQAWSSLGKRADQRKAKLGDSHDLQRFLSDFRDLMSWINGIRGLVSSDELAKDVTGAEALLERHQEHRTEIDARAGTFQAFEQFGQQLLAHGHYASPEIKQKLDILDQERADLEKAWVQRRMMLDQCLELQLFHRDCEQAENWMAAREAFLNTEDKGDSLDSVEALIKKHEDFDKAINVQEEKIAALQAFADQLIAAGHYAKGDISSRRNEVLDRWRRLKAQMIEKRSKLGESQTLQQFSRDVDEIEAWISEKLQTASDESYKDPTNIQSKHQKHQAFEAELHANADRIRGVIDMGNSLIERGACAGSEDAVKARLAALADQWQFLVQKSAEKSQKLKEANKQQNFNTGIKDFDFWLSEVEALLASEDYGKDLASVNNLLKKHQLLEADISAHEDRLKDLNSQADSLMTSSAFDTSQVKDKRDTINGRFQKIKSMAASRRAKLNESHRLHQFFRDMDDEESWIKEKKLLVGSEDYGRDLTGVQNLRKKHKRLEAELAAHEPAIQGVLDTGKKLSDDNTIGKEEIQQRLAQFVEHWKELKQLAAARGQRLEESLEYQQFVANVEEEEAWINEKMTLVASEDYGDTLAAIQGLLKKHEAFETDFTVHKDRVNDVCTNGQDLIKKNNHHEENISSKMKGLNGKVSDLEKAAAQRKAKLDENSAFLQFNWKADVVESWIGEKENSLKTDDYGRDLSSVQTLLTKQETFDAGLQAFQQEGIANITALKDQLLAAKHVQSKAIEARHASLMKRWSQLLANSAARKKKLLEAQSHFRKVEDLFLTFAKKASAFNSWFENAEEDLTDPVRCNSLEEIKALREAHDAFRSSLSSAQADFNQLAELDRQIKSFRVASNPYTWFTMEALEETWRNLQKIIKERELELQKEQRRQEENDKLRQEFAQHANAFHQWIQETRTYLLDGSCMVEESGTLESQLEATKRKHQEIRAMRSQLKKIEDLGAAMEEALILDNKYTEHSTVGLAQQWDQLDQLGMRMQHNLEQQIQARNTTGVTEEALKEFSMMFKHFDKDKSGRLNHQEFKSCLRSLGYDLPMVEEGEPDPEFEAILDTVDPNRDGHVSLQEYMAFMISRETENVKSSEEIESAFRALSSEGKPYVTKEELYQNLTREQADYCVSHMKPYVDGKGRELPTAFDYVEFTRSLFVN.

Met-1 bears the N-acetylmethionine mark. Spectrin repeat units lie at residues 45–146 (RFQF…IKLL), 150–251 (KLVQ…QGKL), 256–358 (EVQR…ARLN), 361–465 (YRLQ…QYEQ), 468–570 (DLQL…AQLA), 574–676 (HLQQ…KLRE), 679–781 (QQQQ…QKLA), 785–888 (RLQQ…DLED), and 891–969 (QAQQ…ETGK). Phosphoserine is present on Ser-587. Residue Lys-637 is modified to N6-acetyllysine. Residue Lys-803 is modified to N6-acetyllysine. Phosphoserine occurs at positions 924, 982, 999, 1029, 1031, and 1041. The region spanning 967–1026 (TGKELVLALYDYQEKSPREVTMKKGDILTLLNSTNKDWWKVEVNDRQGFVPAAYVKKLDP) is the SH3 domain. One copy of the Spectrin 10 repeat lies at 1096–1166 (LFREANELQQ…LESEGLMAEE (71 aa)). The residue at position 1176 (Tyr-1176) is a Phosphotyrosine. Residues Ser-1190, Ser-1207, Ser-1217, Ser-1291, Ser-1306, Ser-1323, and Ser-1338 each carry the phosphoserine modification. Residues 1233-1336 (HEVQRFHRDA…RADQRKAKLG (104 aa)) form a Spectrin 11 repeat. Spectrin repeat units lie at residues 1339–1442 (HDLQ…MMLD) and 1446–1549 (ELQL…KLGE). At Lys-1519 the chain carries N6-acetyllysine. Residues Ser-1550, Ser-1557, Ser-1578, Ser-1615, and Ser-1647 each carry the phosphoserine modification. Spectrin repeat units follow at residues 1552 to 1656 (TLQQ…KLKE), 1659 to 1762 (KQQN…KLNE), 1764 to 1868 (HRLH…RLEE), 1871 to 1974 (EYQQ…KLDE), 1978 to 2081 (FLQF…KLLE), 2092 to 2194 (LFLT…LELQ), and 2206 to 2310 (LRQE…NLEQ). A Phosphothreonine modification is found at Thr-2020. At Lys-2052 the chain carries N6-acetyllysine. 3 consecutive EF-hand domains span residues 2323-2358 (EALKEFSMMFKHFDKDKSGRLNHQEFKSCLRSLGYD), 2366-2401 (EPDPEFEAILDTVDPNRDGHVSLQEYMAFMISRETE), and 2404-2439 (KSSEEIESAFRALSSEGKPYVTKEELYQNLTREQAD). Residues Asp-2336, Asp-2338, Ser-2340, Arg-2342, Glu-2347, Asp-2379, Asn-2381, Asp-2383, His-2385, and Glu-2390 each coordinate Ca(2+). Lys-2421 carries the post-translational modification N6-acetyllysine.

It belongs to the spectrin family. In terms of assembly, like erythrocyte spectrin, the spectrin-like proteins are capable of forming dimers which can further associate to tetramers. Interacts (via C-terminal spectrin repeats) with TRPC4. Interacts with CALM and EMD. Interacts with isoform 1 of ACP1. Identified in a complex with ACTN4, CASK, IQGAP1, MAGI2, NPHS1 and SPTBN1. Interacts with SHANK3 (via ANK repeats). Interacts with CLN3; this interaction regulates the fodrin localization at the plasma membrane. In terms of processing, phosphorylation of Tyr-1176 decreases sensitivity to cleavage by calpain in vitro.

It is found in the cytoplasm. The protein localises to the cytoskeleton. It localises to the cell cortex. Functionally, fodrin, which seems to be involved in secretion, interacts with calmodulin in a calcium-dependent manner and is thus candidate for the calcium-dependent movement of the cytoskeleton at the membrane. This is Spectrin alpha chain, non-erythrocytic 1 (SPTAN1) from Homo sapiens (Human).